Consider the following 122-residue polypeptide: Large ribosomal subunit protein bL12 (122 aa).

This sequence belongs to the bacterial ribosomal protein bL12 family. As to quaternary structure, homodimer. Part of the ribosomal stalk of the 50S ribosomal subunit. Forms a multimeric L10(L12)X complex, where L10 forms an elongated spine to which 2 to 4 L12 dimers bind in a sequential fashion. Binds GTP-bound translation factors.

Its function is as follows. Forms part of the ribosomal stalk which helps the ribosome interact with GTP-bound translation factors. Is thus essential for accurate translation. The sequence is that of Large ribosomal subunit protein bL12 from Vibrio campbellii (strain ATCC BAA-1116).